A 202-amino-acid polypeptide reads, in one-letter code: Probable thymidylate kinase (202 aa).

13–20 is a binding site for ATP; it reads GIDGSGKT.

This sequence belongs to the thymidylate kinase family.

The catalysed reaction is dTMP + ATP = dTDP + ADP. This Picrophilus torridus (strain ATCC 700027 / DSM 9790 / JCM 10055 / NBRC 100828 / KAW 2/3) protein is Probable thymidylate kinase.